The chain runs to 216 residues: Guanylate kinase (216 aa).

The Guanylate kinase-like domain occupies 15 to 193 (GNLFMVVAPS…ALKQLQNVVH (179 aa)). Residue 22–29 (APSGAGKS) participates in ATP binding.

Belongs to the guanylate kinase family.

Its subcellular location is the cytoplasm. The catalysed reaction is GMP + ATP = GDP + ADP. Functionally, essential for recycling GMP and indirectly, cGMP. The polypeptide is Guanylate kinase (Cupriavidus metallidurans (strain ATCC 43123 / DSM 2839 / NBRC 102507 / CH34) (Ralstonia metallidurans)).